We begin with the raw amino-acid sequence, 465 residues long: tRNA modification GTPase MnmE (465 aa).

3 residues coordinate (6S)-5-formyl-5,6,7,8-tetrahydrofolate: R24, E84, and K127. The region spanning G223–G383 is the TrmE-type G domain. K(+) is bound at residue N233. Residues N233–S238, T252–T258, and D277–G280 each bind GTP. Mg(2+) is bound at residue S237. K(+) contacts are provided by T252, I254, and T257. T258 lines the Mg(2+) pocket. K465 is a (6S)-5-formyl-5,6,7,8-tetrahydrofolate binding site.

Belongs to the TRAFAC class TrmE-Era-EngA-EngB-Septin-like GTPase superfamily. TrmE GTPase family. As to quaternary structure, homodimer. Heterotetramer of two MnmE and two MnmG subunits. K(+) is required as a cofactor.

The protein resides in the cytoplasm. Its function is as follows. Exhibits a very high intrinsic GTPase hydrolysis rate. Involved in the addition of a carboxymethylaminomethyl (cmnm) group at the wobble position (U34) of certain tRNAs, forming tRNA-cmnm(5)s(2)U34. In Janthinobacterium sp. (strain Marseille) (Minibacterium massiliensis), this protein is tRNA modification GTPase MnmE.